A 498-amino-acid chain; its full sequence is Sulfate adenylyltransferase subunit 1 (498 aa).

The region spanning 30-246 (TRPLRLITCG…LELATTRSAQ (217 aa)) is the tr-type G domain. The tract at residues 39–46 (GSVDDGKS) is G1. 39–46 (GSVDDGKS) contributes to the GTP binding site. The segment at 97–101 (GITID) is G2. Residues 118–121 (DTPG) are G3. GTP is bound by residues 118–122 (DTPGH) and 173–176 (NKID). The interval 173–176 (NKID) is G4. The tract at residues 210 to 212 (SAL) is G5.

This sequence belongs to the TRAFAC class translation factor GTPase superfamily. Classic translation factor GTPase family. CysN/NodQ subfamily. In terms of assembly, heterodimer composed of CysD, the smaller subunit, and CysN.

It catalyses the reaction sulfate + ATP + H(+) = adenosine 5'-phosphosulfate + diphosphate. The protein operates within sulfur metabolism; hydrogen sulfide biosynthesis; sulfite from sulfate: step 1/3. Functionally, with CysD forms the ATP sulfurylase (ATPS) that catalyzes the adenylation of sulfate producing adenosine 5'-phosphosulfate (APS) and diphosphate, the first enzymatic step in sulfur assimilation pathway. APS synthesis involves the formation of a high-energy phosphoric-sulfuric acid anhydride bond driven by GTP hydrolysis by CysN coupled to ATP hydrolysis by CysD. This is Sulfate adenylyltransferase subunit 1 from Rhizobium meliloti (strain 1021) (Ensifer meliloti).